The sequence spans 256 residues: Thrombin-like enzyme cerastocytin (256 aa).

A signal peptide spans 1 to 18; sequence MVLISVLASLLVLQLSYA. Positions 19–24 are excised as a propeptide; that stretch reads QKSSEL. A Peptidase S1 domain is found at 25–247; sequence VIGGAECNIN…YTDWIRNIIA (223 aa). 5 disulfides stabilise this stretch: Cys31–Cys161, Cys98–Cys254, Cys140–Cys208, Cys172–Cys187, and Cys198–Cys223. Asn44 carries an N-linked (GlcNAc...) asparagine glycan. Catalysis depends on charge relay system residues His65 and Asp108. 3 N-linked (GlcNAc...) asparagine glycosylation sites follow: Asn119, Asn120, and Asn152. Ser202 acts as the Charge relay system in catalysis.

Belongs to the peptidase S1 family. Snake venom subfamily. In terms of assembly, monomer. As to expression, expressed by the venom gland.

It is found in the secreted. With respect to regulation, its platelets aggregating activity is inhibited by chlorpromazine, theophylline mepacrine. Its platelet aggregating activity and its amidolytic activity are inhibited by PMSF, TPCK, TLCK and soybean trypsin inhibitors. Is unaffected by hirudin or by antithrombin-III in the presence of heparin. Thrombin-like snake venom serine protease which potently induces platelet aggregation and has fibrinogenolytic activities. Clots purified fibrinogen and hydrolyzes alpha-chains (FGA). High concentrations of this enzyme also cleave prothrombin (F2) and factor X (F10). Is also able to activate factor XIII (F8). This chain is Thrombin-like enzyme cerastocytin, found in Cerastes cerastes (Horned desert viper).